Reading from the N-terminus, the 115-residue chain is T cell receptor beta variable 7-4 (115 aa).

Positions 1-21 are cleaved as a signal peptide; it reads MGTRLLCWVVLGFLGTDHTGA. The Ig-like domain maps to 22-115; sequence GVSQSPRYKV…SAVYLCASSL (94 aa). C42 and C111 form a disulfide bridge. The disordered stretch occupies residues 67–97; it reads YSQSDAQRDKSGRPSGRFSAERPERSVSTLK.

As to quaternary structure, alpha-beta TR is a heterodimer composed of an alpha and beta chain; disulfide-linked. The alpha-beta TR is associated with the transmembrane signaling CD3 coreceptor proteins to form the TR-CD3 (TcR or TCR). The assembly of alpha-beta TR heterodimers with CD3 occurs in the endoplasmic reticulum where a single alpha-beta TR heterodimer associates with one CD3D-CD3E heterodimer, one CD3G-CD3E heterodimer and one CD247 homodimer forming a stable octameric structure. CD3D-CD3E and CD3G-CD3E heterodimers preferentially associate with TR alpha and TR beta chains, respectively. The association of the CD247 homodimer is the last step of TcR assembly in the endoplasmic reticulum and is required for transport to the cell surface.

Its subcellular location is the cell membrane. V region of the variable domain of T cell receptor (TR) beta chain that participates in the antigen recognition. Alpha-beta T cell receptors are antigen specific receptors which are essential to the immune response and are present on the cell surface of T lymphocytes. Recognize peptide-major histocompatibility (MH) (pMH) complexes that are displayed by antigen presenting cells (APC), a prerequisite for efficient T cell adaptive immunity against pathogens. Binding of alpha-beta TR to pMH complex initiates TR-CD3 clustering on the cell surface and intracellular activation of LCK that phosphorylates the ITAM motifs of CD3G, CD3D, CD3E and CD247 enabling the recruitment of ZAP70. In turn ZAP70 phosphorylates LAT, which recruits numerous signaling molecules to form the LAT signalosome. The LAT signalosome propagates signal branching to three major signaling pathways, the calcium, the mitogen-activated protein kinase (MAPK) kinase and the nuclear factor NF-kappa-B (NF-kB) pathways, leading to the mobilization of transcription factors that are critical for gene expression and essential for T cell growth and differentiation. The T cell repertoire is generated in the thymus, by V-(D)-J rearrangement. This repertoire is then shaped by intrathymic selection events to generate a peripheral T cell pool of self-MH restricted, non-autoaggressive T cells. Post-thymic interaction of alpha-beta TR with the pMH complexes shapes TR structural and functional avidity. The protein is T cell receptor beta variable 7-4 of Homo sapiens (Human).